Consider the following 32-residue polypeptide: Conotoxin pr6b (32 aa).

4-hydroxyproline is present on residues proline 6, proline 13, proline 20, and proline 29. Intrachain disulfides connect cysteine 7–cysteine 18, cysteine 14–cysteine 23, and cysteine 17–cysteine 31.

Expressed by the venom duct.

The protein resides in the secreted. In terms of biological role, intraperitoneal injection into fish (0.5 nmol) provokes vertical suspension and paralysis after 6 minutes. This chain is Conotoxin pr6b, found in Conus parius (Cone snail).